Consider the following 260-residue polypeptide: 4-hydroxy-tetrahydrodipicolinate reductase (260 aa).

12–17 (GFRGKM) provides a ligand contact to NAD(+). Lys-40 contacts NADP(+). Residues 92–94 (GTT) and 118–121 (APNF) each bind NAD(+). The active-site Proton donor/acceptor is His-148. Position 149 (His-149) interacts with (S)-2,3,4,5-tetrahydrodipicolinate. Catalysis depends on Lys-152, which acts as the Proton donor. Position 158–159 (158–159 (GT)) interacts with (S)-2,3,4,5-tetrahydrodipicolinate.

Belongs to the DapB family.

Its subcellular location is the cytoplasm. The catalysed reaction is (S)-2,3,4,5-tetrahydrodipicolinate + NAD(+) + H2O = (2S,4S)-4-hydroxy-2,3,4,5-tetrahydrodipicolinate + NADH + H(+). The enzyme catalyses (S)-2,3,4,5-tetrahydrodipicolinate + NADP(+) + H2O = (2S,4S)-4-hydroxy-2,3,4,5-tetrahydrodipicolinate + NADPH + H(+). The protein operates within amino-acid biosynthesis; L-lysine biosynthesis via DAP pathway; (S)-tetrahydrodipicolinate from L-aspartate: step 4/4. Its function is as follows. Catalyzes the conversion of 4-hydroxy-tetrahydrodipicolinate (HTPA) to tetrahydrodipicolinate. The polypeptide is 4-hydroxy-tetrahydrodipicolinate reductase (Lactococcus lactis subsp. lactis (strain IL1403) (Streptococcus lactis)).